The following is a 476-amino-acid chain: Adenosylhomocysteinase (476 aa).

Substrate contacts are provided by T67, D142, and E202. T203 to T205 contacts NAD(+). 2 residues coordinate substrate: K232 and D236. NAD(+) contacts are provided by residues N237, G266–G271, E289, N324, I345–H347, and N390.

This sequence belongs to the adenosylhomocysteinase family. NAD(+) is required as a cofactor.

It is found in the cytoplasm. The catalysed reaction is S-adenosyl-L-homocysteine + H2O = L-homocysteine + adenosine. It functions in the pathway amino-acid biosynthesis; L-homocysteine biosynthesis; L-homocysteine from S-adenosyl-L-homocysteine: step 1/1. Functionally, may play a key role in the regulation of the intracellular concentration of adenosylhomocysteine. The protein is Adenosylhomocysteinase of Synechococcus sp. (strain CC9902).